Here is a 452-residue protein sequence, read N- to C-terminus: Type II methyltransferase M.EcaI (452 aa).

Belongs to the N(4)/N(6)-methyltransferase family.

The catalysed reaction is a 2'-deoxyadenosine in DNA + S-adenosyl-L-methionine = an N(6)-methyl-2'-deoxyadenosine in DNA + S-adenosyl-L-homocysteine + H(+). Its function is as follows. A beta subtype methylase, recognizes the double-stranded sequence 5'-GGTNACC-3', methylates A-5 on both strands and protects the DNA from cleavage by the EcaI endonuclease. The protein is Type II methyltransferase M.EcaI (ecaIM) of Enterobacter cloacae.